The following is a 382-amino-acid chain: Ribosomal RNA large subunit methyltransferase G (382 aa).

The protein belongs to the methyltransferase superfamily. RlmG family.

The protein localises to the cytoplasm. It carries out the reaction guanosine(1835) in 23S rRNA + S-adenosyl-L-methionine = N(2)-methylguanosine(1835) in 23S rRNA + S-adenosyl-L-homocysteine + H(+). In terms of biological role, specifically methylates the guanine in position 1835 (m2G1835) of 23S rRNA. The polypeptide is Ribosomal RNA large subunit methyltransferase G (Aliivibrio salmonicida (strain LFI1238) (Vibrio salmonicida (strain LFI1238))).